The sequence spans 1147 residues: ATP-dependent helicase/deoxyribonuclease subunit B (1147 aa).

Residue 8-15 (GRAGSGKS) coordinates ATP. [4Fe-4S] cluster is bound by residues C786, C1106, C1109, and C1115.

Belongs to the helicase family. AddB/RexB type 1 subfamily. Heterodimer of AddA and AddB. Mg(2+) serves as cofactor. [4Fe-4S] cluster is required as a cofactor.

In terms of biological role, the heterodimer acts as both an ATP-dependent DNA helicase and an ATP-dependent, dual-direction single-stranded exonuclease. Recognizes the chi site generating a DNA molecule suitable for the initiation of homologous recombination. The AddB subunit has 5' -&gt; 3' nuclease activity but not helicase activity. The polypeptide is ATP-dependent helicase/deoxyribonuclease subunit B (Clostridium botulinum (strain Loch Maree / Type A3)).